We begin with the raw amino-acid sequence, 404 residues long: uncharacterized protein (404 aa).

Belongs to the lymphocryptovirus BTRF1 family.

This is an uncharacterized protein from Epstein-Barr virus (strain GD1) (HHV-4).